The following is a 288-amino-acid chain: Urease accessory protein UreD 1 (288 aa).

Residues 1–10 are compositionally biased toward pro residues; sequence MHGPLAPAPS. The segment at 1 to 35 is disordered; the sequence is MHGPLAPAPSPERLGAAPARQRSDGRIRLRVGPAR.

Belongs to the UreD family. As to quaternary structure, ureD, UreF and UreG form a complex that acts as a GTP-hydrolysis-dependent molecular chaperone, activating the urease apoprotein by helping to assemble the nickel containing metallocenter of UreC. The UreE protein probably delivers the nickel.

Its subcellular location is the cytoplasm. Required for maturation of urease via the functional incorporation of the urease nickel metallocenter. The polypeptide is Urease accessory protein UreD 1 (Methylobacterium radiotolerans (strain ATCC 27329 / DSM 1819 / JCM 2831 / NBRC 15690 / NCIMB 10815 / 0-1)).